We begin with the raw amino-acid sequence, 353 residues long: L-tryptophan dehydrogenase (353 aa).

Residue arginine 44 participates in NAD(+) binding. Catalysis depends on lysine 80, which acts as the Proton donor/acceptor. NAD(+) contacts are provided by residues aspartate 114, threonine 146, 176–181 (GLGNVG), lysine 204, and 255–257 (AAN).

It belongs to the Glu/Leu/Phe/Val dehydrogenases family. Homodimer.

The enzyme catalyses L-tryptophan + NAD(+) + H2O = indole-3-pyruvate + NH4(+) + NADH + H(+). Functionally, catalyzes the reversible oxidative deamination of L-tryptophan to indole-3-pyruvate in the presence of NAD(+). Cannot use other L-amino acids and D-Trp. Involved in the biosynthesis of scytonemin, a cyanobacterial radiation-absorbing pigment. In Nostoc punctiforme (strain ATCC 29133 / PCC 73102), this protein is L-tryptophan dehydrogenase.